A 70-amino-acid chain; its full sequence is DNA gyrase inhibitor YacG (70 aa).

Zn(2+) is bound by residues C7, C10, C26, and C30.

The protein belongs to the DNA gyrase inhibitor YacG family. Interacts with GyrB. Requires Zn(2+) as cofactor.

Its function is as follows. Inhibits all the catalytic activities of DNA gyrase by preventing its interaction with DNA. Acts by binding directly to the C-terminal domain of GyrB, which probably disrupts DNA binding by the gyrase. This is DNA gyrase inhibitor YacG from Shewanella woodyi (strain ATCC 51908 / MS32).